A 367-amino-acid chain; its full sequence is Peptide chain release factor 2 (367 aa).

An N5-methylglutamine modification is found at Gln254.

The protein belongs to the prokaryotic/mitochondrial release factor family. In terms of processing, methylated by PrmC. Methylation increases the termination efficiency of RF2.

It is found in the cytoplasm. Peptide chain release factor 2 directs the termination of translation in response to the peptide chain termination codons UGA and UAA. The sequence is that of Peptide chain release factor 2 from Leptospira borgpetersenii serovar Hardjo-bovis (strain JB197).